The chain runs to 1198 residues: Tetratricopeptide repeat protein 17 (1198 aa).

The TPR 1 repeat unit spans residues 313-346 (LTSHYTLGNIYAMLGEYNHSVLCYEQALQAQPGF). Residues 358–399 (CQQKLEQRLEAQHRSLQRTLNELKEYQKQHDHYLRQQEMLDK) are a coiled coil. TPR repeat units follow at residues 630-663 (WMMQ…APPQ) and 700-733 (PHTL…SVHC). Disordered regions lie at residues 771–792 (DSEL…VWDS) and 814–839 (NGSG…EEQD). A compositionally biased stretch (basic and acidic residues) spans 821-832 (GQDRTREPKAEG). TPR repeat units follow at residues 1071–1105 (SWVL…APHH), 1108–1141 (DVPL…APHF), and 1142–1175 (VVNH…QPEF).

Belongs to the TTC17 family.

It is found in the cytoplasm. It localises to the cell membrane. The protein resides in the cytoskeleton. Functionally, plays a role in primary ciliogenesis by modulating actin polymerization. This chain is Tetratricopeptide repeat protein 17 (ttc17), found in Danio rerio (Zebrafish).